Consider the following 474-residue polypeptide: Probable CAAX prenyl protease 1 (474 aa).

A run of 3 helical transmembrane segments spans residues 103 to 123 (SWFS…IIKY), 196 to 216 (IFVI…SVVV), and 230 to 250 (FIMY…TIAP). Histidine 332 serves as a coordination point for Zn(2+). The active site involves glutamate 333. Histidine 336 provides a ligand contact to Zn(2+). The next 2 helical transmembrane spans lie at 344 to 364 (INTI…AAFI) and 381 to 401 (VIVG…ILTF). A Zn(2+)-binding site is contributed by glutamate 411. The active-site Proton donor is aspartate 415.

The protein belongs to the peptidase M48A family. The cofactor is Zn(2+).

It is found in the endoplasmic reticulum membrane. The enzyme catalyses Hydrolyzes the peptide bond -P2-(S-farnesyl or geranylgeranyl)C-P1'-P2'-P3'-COOH where P1' and P2' are amino acids with aliphatic side chains and P3' is any C-terminal residue.. Proteolytically removes the C-terminal three residues of farnesylated proteins. This chain is Probable CAAX prenyl protease 1, found in Schizosaccharomyces pombe (strain 972 / ATCC 24843) (Fission yeast).